A 207-amino-acid polypeptide reads, in one-letter code: Large ribosomal subunit protein uL4 (207 aa).

The tract at residues 44 to 78 (MRQGTHKTKNRAEVSGGGRKPWRQKGTGRARQGSI) is disordered.

It belongs to the universal ribosomal protein uL4 family. Part of the 50S ribosomal subunit.

Its function is as follows. One of the primary rRNA binding proteins, this protein initially binds near the 5'-end of the 23S rRNA. It is important during the early stages of 50S assembly. It makes multiple contacts with different domains of the 23S rRNA in the assembled 50S subunit and ribosome. This protein when expressed in E.coli represses the endogenous S10 operon; this may not occur in B.stearothermophilus however. In terms of biological role, forms part of the polypeptide exit tunnel. In Geobacillus stearothermophilus (Bacillus stearothermophilus), this protein is Large ribosomal subunit protein uL4 (rplD).